Consider the following 712-residue polypeptide: Sesterterpene synthase btcA (712 aa).

Positions 1–332 are terpene cyclase; it reads MTTIWEHCVD…CANCPRHHAW (332 aa). Residue Asp96 participates in Mg(2+) binding. Substrate is bound by residues Asp96, Asn234, 238-242, and 328-329; these read SWDRE and RH. Residues 96 to 100 carry the DDXXD 1 motif; that stretch reads DDLCD. Positions 234–242 match the NSE/DTE motif; it reads NDYWSWDRE. The segment at 333 to 706 is prenyltransferase; the sequence is RDEESSPSER…VMRIVLSRLS (374 aa). The interval 334 to 373 is disordered; it reads DEESSPSERSFSPSNEGIEDPRLSPGASTTSSMSQKSSPA. Low complexity-rich tracts occupy residues 340 to 349 and 361 to 373; these read SERSFSPSNE and STTS…SSPA. Isopentenyl diphosphate contacts are provided by Lys414, Arg417, and His446. Residues Asp453 and Asp457 each coordinate Mg(2+). A DDXXD 2 motif is present at residues 453–457; sequence DDIED. Arg462 provides a ligand contact to dimethylallyl diphosphate. Residue Arg463 coordinates isopentenyl diphosphate. Dimethylallyl diphosphate is bound by residues Lys540, Thr541, Gln580, Asn587, Lys597, and Lys607.

It in the N-terminal section; belongs to the terpene synthase family. The protein in the C-terminal section; belongs to the FPP/GGPP synthase family. As to quaternary structure, hexamer. Requires Mg(2+) as cofactor.

The enzyme catalyses isopentenyl diphosphate + (2E,6E)-farnesyl diphosphate = (2E,6E,10E)-geranylgeranyl diphosphate + diphosphate. It carries out the reaction isopentenyl diphosphate + (2E,6E,10E)-geranylgeranyl diphosphate = (2E,6E,10E,14E)-geranylfarnesyl diphosphate + diphosphate. Its pathway is secondary metabolite biosynthesis; terpenoid biosynthesis. Its function is as follows. Bifunctional terpene synthase; part of the gene cluster that mediates the biosynthesis of betaestacins. The bifunctional terpene synthase btcA converts isopentenyl diphosphate (IPP) and dimethylallyl diphosphate (DMAPP) into the sesterterpene betaestacin I. The C-terminal prenyltransferase (PT) domain of btcA catalyzes formation of GFPP, whereas the N-terminal terpene cyclase (TC) domain catalyzes the cyclization of GFPP into betaestacin I. The cytochrome P450 monooxygenase btcB oxidizes the C25 methyl group of betaestacin I to yield the carboxylic acid betaestacin IV via the alcohol betaestacin III. The cytochrome P450 monooxygenase btcC further catalyzes the multistep oxidation of betaestacin IV to produce several compounds, including betaestacins Va, Vb, Vc and VI. This Colletotrichum orbiculare (strain 104-T / ATCC 96160 / CBS 514.97 / LARS 414 / MAFF 240422) (Cucumber anthracnose fungus) protein is Sesterterpene synthase btcA.